The sequence spans 192 residues: Adenylate kinase (192 aa).

ATP is bound at residue 10 to 18 (GVPGVGGTT).

This sequence belongs to the archaeal adenylate kinase family. Monomer.

It localises to the cytoplasm. The enzyme catalyses AMP + ATP = 2 ADP. The chain is Adenylate kinase from Methanococcus maripaludis (strain C6 / ATCC BAA-1332).